The chain runs to 541 residues: Calcium/calmodulin-dependent protein kinase kinase (541 aa).

Residues 83–106 form a disordered region; that stretch reads AVQEDDEAGPHSSNNLAATMSPNL. The segment covering 93–106 has biased composition (polar residues); that stretch reads HSSNNLAATMSPNL. Residues 130–411 enclose the Protein kinase domain; the sequence is YRLMEEIGQG…LHEVKVHTWV (282 aa). ATP is bound by residues 136–144 and Lys-159; that span reads IGQGSYGIV. The segment at 169–190 is RP domain; that stretch reads NFACFRQPPPRRNKENAAPSVL. Asp-276 (proton acceptor) is an active-site residue. The segment at 437–442 is autoinhibitory domain; it reads ENCVRV. Positions 440–465 are calmodulin-binding; sequence VRVIPRLDTLILVKAMGHRKRFGNPF. The disordered stretch occupies residues 462–512; that stretch reads GNPFRNKLSAQSSIRDRRKSSSVKDPTYVPPPNSPPATSNNNLNSTKVDRP. The span at 497-507 shows a compositional bias: low complexity; the sequence is PATSNNNLNST.

This sequence belongs to the protein kinase superfamily. Ser/Thr protein kinase family. The cofactor is Mg(2+). Expressed in head and tail neurons and vulval muscles.

It is found in the cytoplasm. The catalysed reaction is L-seryl-[protein] + ATP = O-phospho-L-seryl-[protein] + ADP + H(+). It catalyses the reaction L-threonyl-[protein] + ATP = O-phospho-L-threonyl-[protein] + ADP + H(+). Its activity is regulated as follows. Activated by Ca(2+)/calmodulin. Binding of calmodulin may relieve intrasteric autoinhibition. Functionally, calcium/calmodulin-dependent protein kinase which phosphorylates cmk-1. Component of a calcium-triggered signaling cascade involved in CRE-mediated transcriptional activation, probably through cmk-1-mediated crh-1/CREB phosphorylation. Plays a role in salt-avoidance learning behavior via the phosphorylation of cmk-1. The chain is Calcium/calmodulin-dependent protein kinase kinase from Caenorhabditis elegans.